The chain runs to 533 residues: NAD(P)H-quinone oxidoreductase chain 4 (533 aa).

A run of 15 helical transmembrane segments spans residues 5-25, 36-56, 70-90, 91-111, 115-135, 137-157, 169-189, 210-230, 244-264, 278-298, 315-335, 336-356, 377-397, 418-438, and 465-485; these read VPWLSLSILVPIVGALLVPLV, WYALIVTLITFLITVAAYLTG, VSWLPDLGLTWAVGADGLSMP, LILLTSFITSLACLAAWPVSF, LFYFLLLAMDGGQIAVFAVQD, LLFFLAWELELIPVYLLLAIW, FILYTAGSSLFILLAALAMGF, GFQLLCYAGLLIAFGVKLPIV, TAPVHMLLAGILLKMGGYALL, FAPLLIVLGVVNIIYAALTSF, MGFVLIGVGSFSALGTSGAML, QMISHGLIGASLFFLVGATYD, FALWTVCALASLALPGMSGFV, VVICGLAAVGVILTPIYLLSM, and VYIIGCLLVPIIGIGLYPKLM.

This sequence belongs to the complex I subunit 4 family.

The protein resides in the cellular thylakoid membrane. It catalyses the reaction a plastoquinone + NADH + (n+1) H(+)(in) = a plastoquinol + NAD(+) + n H(+)(out). The enzyme catalyses a plastoquinone + NADPH + (n+1) H(+)(in) = a plastoquinol + NADP(+) + n H(+)(out). Its function is as follows. NDH-1 shuttles electrons from NAD(P)H, via FMN and iron-sulfur (Fe-S) centers, to quinones in the respiratory chain. The immediate electron acceptor for the enzyme in this species is believed to be plastoquinone. Couples the redox reaction to proton translocation (for every two electrons transferred, four hydrogen ions are translocated across the cytoplasmic membrane), and thus conserves the redox energy in a proton gradient. The sequence is that of NAD(P)H-quinone oxidoreductase chain 4 from Synechococcus sp. (strain CC9605).